Here is a 700-residue protein sequence, read N- to C-terminus: MKIFSVRQTVLPALLVLSPVVFAADEQTMIVSAAPQVVSELDTPAAVSVVDGEEMRLATPRINLSESLTGVPGLQVQNRQNYAQDLQLSIRGFGSRSTYGIRGIRLYVDGIPATMPDGQGQTSNIDLSSVQNVEVLRGPFSALYGNASGGVMNVTTQTGQQPPTIEASSYYGSFGSWRYGLKATGATGDGTQPGDVDYTVSTTRFTTHGYRDHSGAQKNLANAKLGVRIDEASKLSLIFNSVDIKADDPGGLTKAEWKANPQQAPRAEQYDTRKTIKQTQAGLRYERSLSSRDDMSVMMYAGERETTQYQSIPMAPQLNPSHAGGVITLQRHYQGIDSRWTHRGELGVPVTFTTGLNYENMSENRKGYNNFRLNSGMPEYGQKGELRRDERNLMWNIDPYLQTQWQLSEKLSLDAGVRYSSVWFDSNDHYVTPGNGDDSGDASYHKWLPAGSLKYAMTDAWNIYLAAGRGFETPTINELSYRADGQSGMNLGLKPSTNDTIEIGSKTRIGDGLLSLALFQTDTDDEIVVDSSSGGRTTYKNAGKTRRQGAELAWDQRFAGDFRVNASWTWLDATYRSNVCNEQDCNGNRMPGIARNMGFASIGYVPEDGWYAGTEARYMGDIMADDENTAKAPSYTLVGLFTGYKYNYHNLTVDLFGRVDNLFDKEYVGSVIVNESNGRYYEPSPGRNYGVGMNIAWRFE.

Positions 1-23 (MKIFSVRQTVLPALLVLSPVVFA) are cleaved as a signal peptide. Residues 39–157 (SELDTPAAVS…SGGVMNVTTQ (119 aa)) form the TBDR plug domain. The next 24 membrane-spanning stretches (beta stranded) occupy residues 132-136 (NVEVL), 150-160 (GVMNVTTQTGQ), 162-171 (PPTIEASSYY), 177-186 (WRYGLKATGA), 195-204 (DVDYTVSTTR), 220-227 (LANAKLGV), 233-241 (SKLSLIFNS), 280-288 (QAGLRYERS), 295-301 (MSVMMYA), 335-344 (GIDSRWTHRG), 350-358 (VTFTTGLNY), 398-405 (DPYLQTQW), 411-419 (LSLDAGVRY), 447-456 (WLPAGSLKYA), 464-468 (YLAAG), 500-509 (TIEIGSKTRI), 511-520 (DGLLSLALFQ), 549-556 (GAELAWDQ), 563-570 (RVNASWTW), 597-604 (MGFASIGY), 611-617 (YAGTEAR), 637-647 (LVGLFTGYKYN), 651-659 (LTVDLFGRV), and 689-697 (YGVGMNIAW). In terms of domain architecture, TBDR beta-barrel spans 162-697 (PPTIEASSYY…NYGVGMNIAW (536 aa)). The short motif at 680 to 700 (YYEPSPGRNYGVGMNIAWRFE) is the TonB C-terminal box element.

It belongs to the TonB-dependent receptor family.

It is found in the cell outer membrane. Its function is as follows. Mediates the TonB-dependent high affinity transport across the outer membrane of pyrroloquinoline quinone (PQQ), a redox cofactor required for the activity of Gcd and Asd dehydrogenases. The uptake process is energised via the TonB-ExbBD complex. Not involved in the transport of an iron-containing substrate under laboratory conditions. The protein is Pyrroloquinoline quinone transporter of Escherichia coli (strain K12).